The primary structure comprises 362 residues: Phosphoglycolate phosphatase 1B, chloroplastic (362 aa).

The N-terminal 54 residues, 1–54 (MLSRSVASAVTPVSSSSLLPNSKPIFCLKTLSGYRSSSFCGGCIRKINHKPLRM), are a transit peptide targeting the chloroplast. T55 carries the N-acetylthreonine modification. Catalysis depends on E80, which acts as the Nucleophile. S356 carries the phosphoserine modification.

It belongs to the HAD-like hydrolase superfamily. CbbY/CbbZ/Gph/YieH family.

The protein resides in the plastid. Its subcellular location is the chloroplast. The catalysed reaction is 2-phosphoglycolate + H2O = glycolate + phosphate. Functionally, photorespiratory enzyme that dephosphorylates the 2-phosphoglycolate produced by the RuBisCO oxygenation reaction. The chain is Phosphoglycolate phosphatase 1B, chloroplastic (PGLP1B) from Arabidopsis thaliana (Mouse-ear cress).